The primary structure comprises 179 residues: Probable chorismate pyruvate-lyase (179 aa).

Arginine 82, leucine 120, and glutamate 165 together coordinate substrate.

It belongs to the UbiC family.

Its subcellular location is the cytoplasm. It catalyses the reaction chorismate = 4-hydroxybenzoate + pyruvate. It participates in cofactor biosynthesis; ubiquinone biosynthesis. In terms of biological role, removes the pyruvyl group from chorismate, with concomitant aromatization of the ring, to provide 4-hydroxybenzoate (4HB) for the ubiquinone pathway. In Vibrio parahaemolyticus serotype O3:K6 (strain RIMD 2210633), this protein is Probable chorismate pyruvate-lyase.